Reading from the N-terminus, the 206-residue chain is Potassium channel B446_29190 (206 aa).

Methionine 1 is a topological domain (cytoplasmic). Residues 2–25 (NESGRVEAFSDGVFAIAITLLILD) form a helical membrane-spanning segment. Residues 6-12 (RVEAFSD) carry the RxxxFSD motif motif. Residues 26–44 (IKVPKADGPGGLWHALGAQ) lie on the Extracellular side of the membrane. The short helix H1 stretch occupies residues 31–34 (ADGP). The short helix H2 stretch occupies residues 36–42 (GLWHALG). A helical membrane pass occupies residues 45 to 70 (WPSYAAYVVSFLVIGIMWVNHHQVFS). At 71 to 76 (YVARVD) the chain is on the cytoplasmic side. Residues 77-102 (RALMFLNLLVLMVVAAVPWPTAMLAE) traverse the membrane as a helical segment. Residues 103–110 (YLREDRAS) lie on the Extracellular side of the membrane. The chain crosses the membrane as a helical span at residues 111-135 (HVAAAVYSLVMVAMALAFQALWWHL). The Cytoplasmic portion of the chain corresponds to 136–147 (TRTGHLFDPRVD). Residues 148–174 (APAARATRIRFALGSLGYPLTVGLAFV) traverse the membrane as a helical segment. Residues 175 to 176 (SA) are Extracellular-facing. The helical transmembrane segment at 177–192 (PLTLAAHGLLALYYGF) threads the bilayer. Topologically, residues 193–206 (NQVPVPTREAAAPS) are cytoplasmic.

The protein belongs to the TMEM175 family. In terms of assembly, homotetramer.

It is found in the membrane. The enzyme catalyses K(+)(in) = K(+)(out). Functionally, potassium channel. The chain is Potassium channel B446_29190 from Streptomyces collinus (strain DSM 40733 / Tue 365).